Consider the following 174-residue polypeptide: Bifunctional protein PyrR (174 aa).

Substrate-binding positions include 38-39 (SG), 95-103 (DDVLATGRT), and R128. A PRPP-binding motif is present at residues 91-103 (ILLVDDVLATGRT).

This sequence belongs to the purine/pyrimidine phosphoribosyltransferase family. PyrR subfamily.

The catalysed reaction is UMP + diphosphate = 5-phospho-alpha-D-ribose 1-diphosphate + uracil. In terms of biological role, regulates the transcription of the pyrimidine nucleotide (pyr) operon in response to exogenous pyrimidines. Functionally, also displays a weak uracil phosphoribosyltransferase activity which is not physiologically significant. This Ralstonia nicotianae (strain ATCC BAA-1114 / GMI1000) (Ralstonia solanacearum) protein is Bifunctional protein PyrR.